We begin with the raw amino-acid sequence, 339 residues long: Trace amine-associated receptor 2 (339 aa).

Residues 1–36 (MTSFEAQQETFDCSEYGNGSCPENERSLGVRAAMYS) lie on the Extracellular side of the membrane. Residue Asn18 is glycosylated (N-linked (GlcNAc...) asparagine). Disulfide bonds link Cys21/Cys185 and Cys104/Cys189. A helical membrane pass occupies residues 37 to 57 (LMAGAIFITIFGNLVMIISIS). Topologically, residues 58-67 (YFKQLHTPTN) are cytoplasmic. The helical transmembrane segment at 68-88 (LLILSMAVTDFLLGFTIMPYS) threads the bilayer. Over 89–106 (MVRSVENCWYFGLTFCKI) the chain is Extracellular. Residues 107–127 (HYSFDLMLSITSIFHLCSVAI) traverse the membrane as a helical segment. The Cytoplasmic portion of the chain corresponds to 128 to 150 (DRFYAICHPLHYCTKMTIPVVKR). A helical transmembrane segment spans residues 151–171 (LLLVCWSVPGAFAFGVVFSEA). Over 172–195 (YADGIEGYDILVACSSSCPVMFNK) the chain is Extracellular. A helical transmembrane segment spans residues 196 to 216 (LWGTTLFVAGFFTPSSMMVGI). Residues 217–251 (YGKIFAVSKKHARVIDNLPENQNNQMRKDKKAAKT) lie on the Cytoplasmic side of the membrane. A helical transmembrane segment spans residues 252-272 (LGIVMGVFLLCWFPCFFTILL). Residues 273-287 (DPFLNFSTPAILFDA) lie on the Extracellular side of the membrane. A glycan (N-linked (GlcNAc...) asparagine) is linked at Asn277. Residues 288–310 (LTWFGYFNSTCNPLIYGFFYPWF) traverse the membrane as a helical segment. Residues 311–339 (RRALRYILLGKIFSSHFHNTNLFTQKETE) lie on the Cytoplasmic side of the membrane.

The protein belongs to the G-protein coupled receptor 1 family.

It localises to the cell membrane. In terms of biological role, orphan olfactory receptor specific for trace amines. Trace amine compounds are enriched in animal body fluids and act on trace amine-associated receptors (TAARs) to elicit both intraspecific and interspecific innate behaviors. Ligand-binding causes a conformation change that triggers signaling via the G(s)-class of G-proteins which activate adenylate cyclase. May also be required to provide olfactory input into limbic brain areas to regulate emotional behaviors likely via modulation of the dopamine system. This is Trace amine-associated receptor 2 (Taar2) from Rattus norvegicus (Rat).